Reading from the N-terminus, the 264-residue chain is Thymidylate synthase (264 aa).

R21 is a dUMP binding site. H51 contacts (6R)-5,10-methylene-5,6,7,8-tetrahydrofolate. 126–127 (RR) is a dUMP binding site. C146 functions as the Nucleophile in the catalytic mechanism. Residues 166–169 (RSAD), N177, and 207–209 (HIY) contribute to the dUMP site. Residue D169 participates in (6R)-5,10-methylene-5,6,7,8-tetrahydrofolate binding. A263 is a binding site for (6R)-5,10-methylene-5,6,7,8-tetrahydrofolate.

The protein belongs to the thymidylate synthase family. Bacterial-type ThyA subfamily. As to quaternary structure, homodimer.

The protein localises to the cytoplasm. It carries out the reaction dUMP + (6R)-5,10-methylene-5,6,7,8-tetrahydrofolate = 7,8-dihydrofolate + dTMP. Its pathway is pyrimidine metabolism; dTTP biosynthesis. In terms of biological role, catalyzes the reductive methylation of 2'-deoxyuridine-5'-monophosphate (dUMP) to 2'-deoxythymidine-5'-monophosphate (dTMP) while utilizing 5,10-methylenetetrahydrofolate (mTHF) as the methyl donor and reductant in the reaction, yielding dihydrofolate (DHF) as a by-product. This enzymatic reaction provides an intracellular de novo source of dTMP, an essential precursor for DNA biosynthesis. In Porphyromonas gingivalis (strain ATCC BAA-308 / W83), this protein is Thymidylate synthase.